The sequence spans 829 residues: E3 ubiquitin-protein ligase Jade-2 (829 aa).

Positions 1–52 (MEEKRRKYSISSDNSDTTDGHVTSTSASRCSKLPSSTKSGWPRQNEKKPSEV) are disordered. Phosphoserine occurs at positions 9 and 15. Residues 9–39 (SISSDNSDTTDGHVTSTSASRCSKLPSSTKS) are compositionally biased toward polar residues. N6-acetyllysine is present on residues Lys32 and Lys38. Ser117 is modified (phosphoserine). The PHD-type 1 zinc-finger motif lies at 199–249 (DVVCDVCRSPEGEDGNEMVFCDKCNVCVHQACYGILKVPTGSWLCRTCALG). The segment at 251-285 (QPKCLLCPKRGGALKPTRSGTKWVHVSCALWIPEV) adopts a C2HC pre-PHD-type zinc-finger fold. Lys298 is modified (N6-acetyllysine). Residues 309–365 (LSCSLCKECTGTCIQCSMPSCITAFHVTCAFDRGLEMRTILADNDEVKFKSLCQEHS) form a PHD-type 2 zinc finger. Disordered regions lie at residues 362-383 (QEHS…PSQA), 517-555 (REPS…AGPE), and 622-817 (SFMR…REAG). Residues 522–535 (RRSKGKKNDSKRKG) are compositionally biased toward basic residues. Basic and acidic residues predominate over residues 536–552 (REGPKGSSPEKKEKVKA). Residues 637 to 650 (KARGRTRLPAKKKP) show a composition bias toward basic residues. Basic and acidic residues predominate over residues 776-786 (ERPKVSLHFDT). A compositionally biased stretch (acidic residues) spans 792–806 (FSDEEMSDSEVEAED).

It belongs to the JADE family. Component of the HBO1 complex composed at least of ING4 or ING5, MYST2/HBO1, MEAF6, and one of JADE1, JADE2 and JADE3. Interacts (via C-terminus) with KDM1A (via AOD/Tower domain).

The enzyme catalyses S-ubiquitinyl-[E2 ubiquitin-conjugating enzyme]-L-cysteine + [acceptor protein]-L-lysine = [E2 ubiquitin-conjugating enzyme]-L-cysteine + N(6)-ubiquitinyl-[acceptor protein]-L-lysine.. Its pathway is protein modification; protein ubiquitination. Functionally, scaffold subunit of some HBO1 complexes, which have a histone H4 acetyltransferase activity. Acts as a E3 ubiquitin-protein ligase mediating the ubiquitination and subsequent proteasomal degradation of target protein histone demethylase KDM1A. Also acts as a ubiquitin ligase E3 toward itself. Positive regulator of neurogenesis. In Mus musculus (Mouse), this protein is E3 ubiquitin-protein ligase Jade-2 (Jade2).